Consider the following 336-residue polypeptide: UPF0324 membrane protein PM1461 (336 aa).

Helical transmembrane passes span 5–23, 30–52, 62–84, 91–113, 123–140, 153–175, 221–238, 250–271, 275–297, and 310–332; these read TLFL…VNLL, LNAN…NTFY, GVIF…RLTL, GINA…LWLG, IVYL…AAIM, VSIA…PLMY, MIRV…SWLL, ISIP…FSLI, IVAW…LGLT, and PLIL…NVGI.

It belongs to the UPF0324 family.

The protein localises to the cell membrane. The chain is UPF0324 membrane protein PM1461 from Pasteurella multocida (strain Pm70).